A 77-amino-acid polypeptide reads, in one-letter code: U11-lycotoxin-Ls1a (77 aa).

A signal peptide spans 1 to 20 (MKLIILTGLVLFAIVSFIEA). The propeptide occupies 21 to 26 (EEETGR).

Belongs to the neurotoxin 19 (CSTX) family. 10 (U11-Lctx) subfamily. Post-translationally, contains 4 disulfide bonds. As to expression, expressed by the venom gland.

It is found in the secreted. The chain is U11-lycotoxin-Ls1a from Lycosa singoriensis (Wolf spider).